Reading from the N-terminus, the 108-residue chain is MEPNSPKKIQFAVPLFQSQIAPEAAEQIRKRRPTPASLVILNEHNSPEIDEKRVTNTQESQNASPKQRKQSVYTPPAMKGVKHLKDQNGSAFPEEEESASEREEKWNH.

The disordered stretch occupies residues 25-108; the sequence is AEQIRKRRPT…ASEREEKWNH (84 aa). Basic and acidic residues predominate over residues 45–54; sequence NSPEIDEKRV. The segment covering 55-73 has biased composition (polar residues); sequence TNTQESQNASPKQRKQSVY. Positions 99–108 are enriched in basic and acidic residues; the sequence is ASEREEKWNH.

This sequence belongs to the protein phosphatase inhibitor 1 family.

The protein localises to the cytoplasm. May increase cell susceptibility to TNF-induced apoptosis. The polypeptide is Protein phosphatase 1 regulatory subunit 1C (Ppp1r1c) (Mus musculus (Mouse)).